Consider the following 434-residue polypeptide: Glutamate-1-semialdehyde 2,1-aminomutase (434 aa).

Lysine 265 carries the post-translational modification N6-(pyridoxal phosphate)lysine.

This sequence belongs to the class-III pyridoxal-phosphate-dependent aminotransferase family. HemL subfamily. Homodimer. Pyridoxal 5'-phosphate serves as cofactor.

It localises to the cytoplasm. The enzyme catalyses (S)-4-amino-5-oxopentanoate = 5-aminolevulinate. It functions in the pathway porphyrin-containing compound metabolism; protoporphyrin-IX biosynthesis; 5-aminolevulinate from L-glutamyl-tRNA(Glu): step 2/2. The sequence is that of Glutamate-1-semialdehyde 2,1-aminomutase from Ruminiclostridium cellulolyticum (strain ATCC 35319 / DSM 5812 / JCM 6584 / H10) (Clostridium cellulolyticum).